The following is a 498-amino-acid chain: Probable cytosol aminopeptidase (498 aa).

Mn(2+) is bound by residues Lys271 and Asp276. Lys283 is an active-site residue. Asp294, Asp353, and Glu355 together coordinate Mn(2+). Arg357 is an active-site residue.

The protein belongs to the peptidase M17 family. Mn(2+) is required as a cofactor.

The protein resides in the cytoplasm. It carries out the reaction Release of an N-terminal amino acid, Xaa-|-Yaa-, in which Xaa is preferably Leu, but may be other amino acids including Pro although not Arg or Lys, and Yaa may be Pro. Amino acid amides and methyl esters are also readily hydrolyzed, but rates on arylamides are exceedingly low.. It catalyses the reaction Release of an N-terminal amino acid, preferentially leucine, but not glutamic or aspartic acids.. Functionally, presumably involved in the processing and regular turnover of intracellular proteins. Catalyzes the removal of unsubstituted N-terminal amino acids from various peptides. This Bordetella petrii (strain ATCC BAA-461 / DSM 12804 / CCUG 43448) protein is Probable cytosol aminopeptidase.